The following is a 200-amino-acid chain: Mediator of RNA polymerase II transcription subunit 22 (200 aa).

A coiled-coil region spans residues 93-122; that stretch reads SVNEAIDQRNQQLRTLQEECDRKLITLRDE. The interval 166 to 200 is disordered; the sequence is LSAPLLASPEPSAGPLQVAAPAHSHAGGPGPTEHA.

Belongs to the Mediator complex subunit 22 family. As to quaternary structure, component of the Mediator complex, which is composed of MED1, MED4, MED6, MED7, MED8, MED9, MED10, MED11, MED12, MED13, MED13L, MED14, MED15, MED16, MED17, MED18, MED19, MED20, MED21, MED22, MED23, MED24, MED25, MED26, MED27, MED29, MED30, MED31, CCNC, CDK8 and CDC2L6/CDK11. The MED12, MED13, CCNC and CDK8 subunits form a distinct module termed the CDK8 module. Mediator containing the CDK8 module is less active than Mediator lacking this module in supporting transcriptional activation. Individual preparations of the Mediator complex lacking one or more distinct subunits have been variously termed ARC, CRSP, DRIP, PC2, SMCC and TRAP.

It localises to the nucleus. Functionally, component of the Mediator complex, a coactivator involved in the regulated transcription of nearly all RNA polymerase II-dependent genes. Mediator functions as a bridge to convey information from gene-specific regulatory proteins to the basal RNA polymerase II transcription machinery. Mediator is recruited to promoters by direct interactions with regulatory proteins and serves as a scaffold for the assembly of a functional preinitiation complex with RNA polymerase II and the general transcription factors. This chain is Mediator of RNA polymerase II transcription subunit 22 (MED22), found in Homo sapiens (Human).